A 338-amino-acid chain; its full sequence is Lipoate-protein ligase A (338 aa).

In terms of domain architecture, BPL/LPL catalytic spans 29–216; the sequence is PTTQRVLFLW…AFFDYFGEQC (188 aa). Residues Arg71, 76–79, and Lys134 contribute to the ATP site; that span reads GAVF. Lys134 lines the (R)-lipoate pocket.

The protein belongs to the LplA family. In terms of assembly, monomer.

Its subcellular location is the cytoplasm. The enzyme catalyses L-lysyl-[lipoyl-carrier protein] + (R)-lipoate + ATP = N(6)-[(R)-lipoyl]-L-lysyl-[lipoyl-carrier protein] + AMP + diphosphate + H(+). It participates in protein modification; protein lipoylation via exogenous pathway; protein N(6)-(lipoyl)lysine from lipoate: step 1/2. Its pathway is protein modification; protein lipoylation via exogenous pathway; protein N(6)-(lipoyl)lysine from lipoate: step 2/2. Functionally, catalyzes both the ATP-dependent activation of exogenously supplied lipoate to lipoyl-AMP and the transfer of the activated lipoyl onto the lipoyl domains of lipoate-dependent enzymes. This Pectobacterium carotovorum subsp. carotovorum (strain PC1) protein is Lipoate-protein ligase A.